The following is a 299-amino-acid chain: MATH domain and coiled-coil domain-containing protein At2g42460 (299 aa).

The MATH domain occupies 7–130 (QKTFTWKIEN…NNTLFIEVYI (124 aa)). A coiled-coil region spans residues 225–262 (FRVKWLKSKLDEISLARKKKVDADAARVQELEGKVKNQ).

This chain is MATH domain and coiled-coil domain-containing protein At2g42460, found in Arabidopsis thaliana (Mouse-ear cress).